The sequence spans 412 residues: FAD-dependent monooxygenase nscC (412 aa).

The N-terminal stretch at 1-21 is a signal peptide; that stretch reads MGKPQETILIIGAGIAGLTAS. Residues glutamate 35 and alanine 46 each contribute to the FAD site. N-linked (GlcNAc...) asparagine glycosylation is found at asparagine 68 and asparagine 92. Residue arginine 119 participates in FAD binding. Asparagine 170, asparagine 231, and asparagine 251 each carry an N-linked (GlcNAc...) asparagine glycan. 2 residues coordinate FAD: aspartate 326 and glycine 339.

It belongs to the paxM FAD-dependent monooxygenase family. Requires FAD as cofactor.

It participates in secondary metabolite biosynthesis. FAD-dependent monooxygenase; part of the gene cluster that mediates the biosynthesis of neosartoricin B, a prenylated anthracenone that probably exhibits T-cell antiproliferative activity, suggestive of a physiological role as an immunosuppressive agent. The non-reducing polyketide synthase nscA probably synthesizes and cyclizes the decaketide backbone. The hydrolase nscB then mediates the product release through hydrolysis followed by spontaneous decarboxylation. The prenyltransferase nscD catalyzes the addition of the dimethylallyl group to the aromatic C5. The FAD-dependent monooxygenase nscC is then responsible for the stereospecific hydroxylation at C2. Neosartoricin B can be converted into two additional compounds neosartoricins C and D. Neosartoricin C is a spirocyclic compound that is cyclized through the attack of C3 hydroxyl on C14, followed by dehydration. On the other hand, neosartoricin D is a further cyclized compound in which attack of C2 on C14 in neosartoricin C results in the formation of the acetal-containing dioxabicyclo-octanone ring. Both of these compounds are novel and possibly represent related metabolites of the gene cluster. The protein is FAD-dependent monooxygenase nscC of Trichophyton rubrum (strain ATCC MYA-4607 / CBS 118892) (Athlete's foot fungus).